The primary structure comprises 706 residues: Transferrin-binding protein B (706 aa).

A signal peptide spans 1–20 (MKHIPLTTLCVAISAVLLTA). Cys-21 carries N-palmitoyl cysteine lipidation. Cys-21 is lipidated: S-diacylglycerol cysteine. Disordered stretches follow at residues 26–92 (GSNP…KEQV) and 384–412 (GSAI…LEGG). Positions 42–51 (GNTGNTGNAG) are enriched in gly residues. A compositionally biased stretch (basic and acidic residues) spans 389-410 (SDKEKDSETKHPFTSDAKDRLE).

This sequence belongs to the TbpB family.

It localises to the cell outer membrane. Its subcellular location is the cell surface. Functionally, moraxella acquires iron by extracting it from serum transferrin (TF) in its human host. Acts as a transferrin receptor and is required for transferrin utilization. This chain is Transferrin-binding protein B, found in Moraxella catarrhalis (Branhamella catarrhalis).